Consider the following 600-residue polypeptide: Elongation factor 4 (600 aa).

The 183-residue stretch at 5–187 folds into the tr-type G domain; sequence SRIRNFSIIA…AIVTRLPPPK (183 aa). GTP contacts are provided by residues 17-22 and 134-137; these read DHGKST and NKID.

The protein belongs to the TRAFAC class translation factor GTPase superfamily. Classic translation factor GTPase family. LepA subfamily.

It localises to the cell inner membrane. The catalysed reaction is GTP + H2O = GDP + phosphate + H(+). Functionally, required for accurate and efficient protein synthesis under certain stress conditions. May act as a fidelity factor of the translation reaction, by catalyzing a one-codon backward translocation of tRNAs on improperly translocated ribosomes. Back-translocation proceeds from a post-translocation (POST) complex to a pre-translocation (PRE) complex, thus giving elongation factor G a second chance to translocate the tRNAs correctly. Binds to ribosomes in a GTP-dependent manner. The protein is Elongation factor 4 of Rhodospirillum centenum (strain ATCC 51521 / SW).